The chain runs to 562 residues: Phosphoglucomutase-1 (562 aa).

M1 is subject to N-acetylmethionine. K16 carries the N6-acetyllysine modification. Residue R23 coordinates alpha-D-glucose 1,6-bisphosphate. A Phosphothreonine modification is found at T115. Alpha-D-glucose 1,6-bisphosphate is bound at residue S117. Catalysis depends on S117, which acts as the Phosphoserine intermediate. S117 provides a ligand contact to Mg(2+). S117 and S134 each carry phosphoserine. T185 carries the post-translational modification Phosphothreonine. S213 is modified (phosphoserine). Residues D288, D290, and D292 each contribute to the Mg(2+) site. Alpha-D-glucose 1,6-bisphosphate contacts are provided by D292 and R293. K349 is subject to N6-acetyllysine. Y353 is modified (phosphotyrosine). T357 is an alpha-D-glucose 1,6-bisphosphate binding site. At S369 the chain carries Phosphoserine. Residues E376, S378, and K389 each coordinate alpha-D-glucose 1,6-bisphosphate. The residue at position 378 (S378) is a Phosphoserine. K419 carries the N6-succinyllysine modification. Residue T467 is modified to Phosphothreonine; by PAK1. Phosphoserine is present on residues S477, S485, and S505. A Phosphothreonine modification is found at T507. Phosphoserine occurs at positions 509 and 541.

The protein belongs to the phosphohexose mutase family. Monomer. Requires Mg(2+) as cofactor. Post-translationally, phosphorylation at Thr-467 by PAK1 significantly enhances enzymatic activity.

It localises to the cytoplasm. It carries out the reaction alpha-D-glucose 1-phosphate = alpha-D-glucose 6-phosphate. The catalysed reaction is O-phospho-L-seryl-[protein] + alpha-D-glucose 1-phosphate = alpha-D-glucose 1,6-bisphosphate + L-seryl-[protein]. The enzyme catalyses alpha-D-glucose 1,6-bisphosphate + L-seryl-[protein] = O-phospho-L-seryl-[protein] + alpha-D-glucose 6-phosphate. Catalyzes the reversible isomerization of alpha-D-glucose 1-phosphate to alpha-D-glucose 6-phosphate. The mechanism proceeds via the intermediate compound alpha-D-glucose 1,6-bisphosphate. This enzyme participates in both the breakdown and synthesis of glucose. The protein is Phosphoglucomutase-1 (PGM1) of Bos taurus (Bovine).